Reading from the N-terminus, the 133-residue chain is Nickel-responsive regulator (133 aa).

Residues His-76, His-87, His-89, and Cys-95 each coordinate Ni(2+).

It belongs to the transcriptional regulatory CopG/NikR family. Homotetramer. The cofactor is Ni(2+).

Its function is as follows. Transcriptional repressor of the nikABCDE operon. Is active in the presence of excessive concentrations of intracellular nickel. The polypeptide is Nickel-responsive regulator (Shigella dysenteriae serotype 1 (strain Sd197)).